Here is a 382-residue protein sequence, read N- to C-terminus: Mannitol-1-phosphate 5-dehydrogenase (382 aa).

3–14 (ALHFGAGNIGRG) serves as a coordination point for NAD(+). At Lys269 the chain carries N6-acetyllysine.

This sequence belongs to the mannitol dehydrogenase family.

The catalysed reaction is D-mannitol 1-phosphate + NAD(+) = beta-D-fructose 6-phosphate + NADH + H(+). This is Mannitol-1-phosphate 5-dehydrogenase from Shigella boydii serotype 18 (strain CDC 3083-94 / BS512).